Consider the following 292-residue polypeptide: Phosphatidylglycerol--prolipoprotein diacylglyceryl transferase (292 aa).

Helical transmembrane passes span 7-27 (IILSVVIILAVGIGLFFFLRE), 45-65 (FQLRWYSICIASGILVAYVLA), 83-103 (LFWGIVAGILGARIYYVIFNW), and 116-136 (IWHGGLAIHGGIFGALLMIFI). Residue Arg-165 coordinates a 1,2-diacyl-sn-glycero-3-phospho-(1'-sn-glycerol). The next 2 helical transmembrane spans lie at 204–224 (PTFLYESLWDITIFVFLYFFV) and 264–284 (AAQVVSIILIFIGAAWYAYII).

The protein belongs to the Lgt family.

The protein resides in the cell inner membrane. The catalysed reaction is L-cysteinyl-[prolipoprotein] + a 1,2-diacyl-sn-glycero-3-phospho-(1'-sn-glycerol) = an S-1,2-diacyl-sn-glyceryl-L-cysteinyl-[prolipoprotein] + sn-glycerol 1-phosphate + H(+). The protein operates within protein modification; lipoprotein biosynthesis (diacylglyceryl transfer). Functionally, catalyzes the transfer of the diacylglyceryl group from phosphatidylglycerol to the sulfhydryl group of the N-terminal cysteine of a prolipoprotein, the first step in the formation of mature lipoproteins. This Fervidobacterium nodosum (strain ATCC 35602 / DSM 5306 / Rt17-B1) protein is Phosphatidylglycerol--prolipoprotein diacylglyceryl transferase.